The sequence spans 1058 residues: Ubiquitin-like modifier-activating enzyme 1 Y (1058 aa).

A disordered region spans residues 1 to 22; it reads MSSSVLSKKRKVSGPDSSLDSS. Residues A477, D503, R514, K527, and 575–576 each bind ATP; that span reads DN. Catalysis depends on C631, which acts as the Glycyl thioester intermediate.

Belongs to the ubiquitin-activating E1 family. As to quaternary structure, monomer. In terms of tissue distribution, expressed in testis in A spermatogonia and spermatids but not (or at very low levels) in pachytene spermatocytes. Also expressed in Y-bearing ovaries and at very low levels in adrenal gland.

It catalyses the reaction ATP + ubiquitin + [E1 ubiquitin-activating enzyme]-L-cysteine = AMP + diphosphate + S-ubiquitinyl-[E1 ubiquitin-activating enzyme]-L-cysteine.. It functions in the pathway protein modification; protein ubiquitination. Functionally, activates ubiquitin by first adenylating its C-terminal glycine residue with ATP, and thereafter linking this residue to the side chain of a cysteine residue in E1, yielding a ubiquitin-E1 thioester and free AMP. The Y chromosome form could be involved in the survival and proliferation of differentiating spermatogonia. This Mus musculus (Mouse) protein is Ubiquitin-like modifier-activating enzyme 1 Y (Uba1y).